A 356-amino-acid polypeptide reads, in one-letter code: Peptide chain release factor 1 (356 aa).

Gln-235 is subject to N5-methylglutamine.

It belongs to the prokaryotic/mitochondrial release factor family. In terms of processing, methylated by PrmC. Methylation increases the termination efficiency of RF1.

It is found in the cytoplasm. Peptide chain release factor 1 directs the termination of translation in response to the peptide chain termination codons UAG and UAA. The chain is Peptide chain release factor 1 from Mycobacteroides abscessus (strain ATCC 19977 / DSM 44196 / CCUG 20993 / CIP 104536 / JCM 13569 / NCTC 13031 / TMC 1543 / L948) (Mycobacterium abscessus).